A 469-amino-acid polypeptide reads, in one-letter code: Mitochondrial adenyl nucleotide antiporter SLC25A25 (469 aa).

A regulatory N-terminal domain region spans residues 1-165 (MLCLCLYVPI…LYWKHSTIFD (165 aa)). The Mitochondrial intermembrane segment spans residues 1–189 (MLCLCLYVPI…ERQTGMWWRH (189 aa)). EF-hand domains are found at residues 47-80 (TYRQWKQKIVQAGDKDLDGQLDFEEFVHYLQDHE), 78-113 (DHEKKLRLVFKSLDKKNDGRIDAQEIMQSLRDLGVK), and 114-149 (ISEQQAEKILKSMDKNGTMTIDWNEWRDYHLLHPVE). Ca(2+) contacts are provided by D60, D62, D64, Q66, and E71. The linker region stretch occupies residues 151-160 (IPEIILYWKH). The tract at residues 166–469 (VGENLTVPDE…LKITLGVQSR (304 aa)) is C-terminal transmembrane transporter domain. Solcar repeat units follow at residues 184-270 (GMWW…MKRL), 278-363 (LRIH…LKNT), and 375-463 (PGVF…LKIT). Residues 190 to 207 (LVAGGGAGAVSRTCTAPL) traverse the membrane as a helical segment. Residues 208–244 (DRLKVLMQVHASRSNNMCIIGGFTQMIREGGAKSLWR) lie on the Mitochondrial matrix side of the membrane. Residues 245-264 (GNGINVLKIAPESAIKFMAY) form a helical membrane-spanning segment. Topologically, residues 265–287 (EQMKRLVGSDQETLRIHERLVAG) are mitochondrial intermembrane. A helical membrane pass occupies residues 288–301 (SLAGAIAQSSIYPM). The Mitochondrial matrix segment spans residues 302–337 (EVLKTRMALRKTGQYSGMLDCAKRILAKEGVAAFYK). The chain crosses the membrane as a helical span at residues 338 to 357 (GYIPNMLGIIPYAGIDLAVY). Residues 358 to 380 (ETLKNTWLQRYAVNSADPGVFVL) are Mitochondrial intermembrane-facing. The chain crosses the membrane as a helical span at residues 381–398 (LACGTISSTCGQLASYPL). The Mitochondrial matrix portion of the chain corresponds to 399–437 (ALVRTRMQAQASIEGAPEVTMSSLFKQILRTEGAFGLYR). Residues 438–457 (GLAPNFMKVIPAVSISYVVY) form a helical membrane-spanning segment. At 458–469 (ENLKITLGVQSR) the chain is on the mitochondrial intermembrane side.

Belongs to the mitochondrial carrier (TC 2.A.29) family. Mainly present in the liver and the skeletal muscle (at protein level).

The protein resides in the mitochondrion inner membrane. It carries out the reaction Mg(2+)(out) + phosphate(in) + ATP(out) = Mg(2+)(in) + phosphate(out) + ATP(in). Its activity is regulated as follows. Activated by an increase in cytosolic calcium levels that induce a conformational change of the N-terminal regulatory domain, uncapping the channel and allowing transport. In terms of biological role, electroneutral antiporter that most probably mediates the transport of adenyl nucleotides through the inner mitochondrial membrane. Originally identified as an ATP-magnesium/inorganic phosphate antiporter, it could have a broader specificity for adenyl nucleotides. By regulating the mitochondrial matrix adenyl nucleotide pool could adapt to changing cellular energetic demands and indirectly regulate adenyl nucleotide-dependent metabolic pathways. This is Mitochondrial adenyl nucleotide antiporter SLC25A25 from Rattus norvegicus (Rat).